Here is a 479-residue protein sequence, read N- to C-terminus: Poly(A) polymerase catalytic subunit (479 aa).

Catalysis depends on residues Asp-202 and Asp-204. Positions 202, 204, and 253 each coordinate Ca(2+).

The protein belongs to the poxviridae poly(A) polymerase catalytic subunit family. In terms of assembly, heterodimer of a large (catalytic) subunit and a small (regulatory) subunit.

It carries out the reaction RNA(n) + ATP = RNA(n)-3'-adenine ribonucleotide + diphosphate. Functionally, polymerase that creates the 3'-poly(A) tail of mRNA's. The chain is Poly(A) polymerase catalytic subunit (OPG063) from Cowpox virus (strain GRI-90 / Grishak) (CPV).